A 629-amino-acid polypeptide reads, in one-letter code: Serine/threonine-protein kinase ICK (629 aa).

The Protein kinase domain occupies 4–284 (YTTIKQLGDG…ASQALRYPYF (281 aa)). Residues 10 to 18 (LGDGTYGSV) and Lys-33 each bind ATP. Asp-125 functions as the Proton acceptor in the catalytic mechanism. Phosphothreonine; by CDK7 is present on Thr-157. Tyr-159 is modified (phosphotyrosine). Phosphoserine is present on Ser-161. 3 disordered regions span residues 292–376 (IISK…SLHN), 455–483 (SESVGTGTTVSTQASSQRRDTPTLQSSAK), and 581–629 (SSLK…PSRR). The segment covering 296 to 306 (DSGKPQREVQD) has biased composition (basic and acidic residues). Positions 309 to 321 (GPPPYIKPAPPAQ) are enriched in pro residues. Composition is skewed to low complexity over residues 322–344 (APAKAYTLISSRPSQASQPPQHS) and 457–470 (SVGTGTTVSTQASS).

The protein belongs to the protein kinase superfamily. CMGC Ser/Thr protein kinase family. CDC2/CDKX subfamily. Requires Mg(2+) as cofactor. In terms of processing, autophosphorylated on serine and threonine residues. Phosphorylation at Thr-157 by CDK7/Cak1p increases kinase activity. Highly expressed in colon and lung, lower levels present in heart, esophagus, stomach, small intestine and ovary. Localizes to the crypt region of large and small intestine.

It localises to the cytoplasm. Its subcellular location is the cytosol. The protein resides in the cell projection. It is found in the cilium. The protein localises to the nucleus. It localises to the cytoskeleton. Its subcellular location is the cilium basal body. The enzyme catalyses L-seryl-[protein] + ATP = O-phospho-L-seryl-[protein] + ADP + H(+). It catalyses the reaction L-threonyl-[protein] + ATP = O-phospho-L-threonyl-[protein] + ADP + H(+). Functionally, has an essential role in ciliogenesis, particularly in neuronal and retinal progenitor cells. Phosphorylates KIF3A. Involved in the control of ciliary length. Regulates the ciliary localization of SHH pathway components as well as the localization of IFT components at ciliary tips. May play a role in cardiac development. Regulates intraflagellar transport (IFT) speed and negatively regulates cilium length in a cAMP and mTORC1 signaling -dependent manner and this regulation requires its kinase activity. The sequence is that of Serine/threonine-protein kinase ICK (Cilk1) from Mus musculus (Mouse).